Here is a 315-residue protein sequence, read N- to C-terminus: Carbamate kinase (315 aa).

The protein belongs to the carbamate kinase family. Homodimer.

The protein localises to the cytoplasm. The catalysed reaction is hydrogencarbonate + NH4(+) + ATP = carbamoyl phosphate + ADP + H2O + H(+). This is Carbamate kinase (cpkA) from Thermococcus kodakarensis (strain ATCC BAA-918 / JCM 12380 / KOD1) (Pyrococcus kodakaraensis (strain KOD1)).